The primary structure comprises 159 residues: Mating-type P-specific polypeptide Pi (159 aa).

The homeobox; TALE-type; partial DNA-binding region spans 103 to 159; the sequence is MTTVRGQCSKCTKPHLMRWLLLHYDNPYPSNSEFYDLSAATGLTRTQLRNWFSNRRR.

Belongs to the TALE/M-ATYP homeobox family.

Its subcellular location is the nucleus. Its function is as follows. Mating type proteins are sequence specific DNA-binding proteins that act as master switches in yeast differentiation by controlling gene expression in a cell type-specific fashion. Required for meiosis, but plays no role in conjugation. In Schizosaccharomyces kambucha (Fission yeast), this protein is Mating-type P-specific polypeptide Pi (matPi).